An 88-amino-acid chain; its full sequence is Small ribosomal subunit protein uS12 (88 aa).

The disordered stretch occupies residues 1–24; it reads RKGRRDKIGKVKTAALKGSPQRRG. The residue at position 81 (aspartate 81) is a 3-methylthioaspartic acid.

The protein belongs to the universal ribosomal protein uS12 family. Part of the 30S ribosomal subunit. Contacts proteins S8 and S17. May interact with IF1 in the 30S initiation complex.

Its function is as follows. With S4 and S5 plays an important role in translational accuracy. Interacts with and stabilizes bases of the 16S rRNA that are involved in tRNA selection in the A site and with the mRNA backbone. Located at the interface of the 30S and 50S subunits, it traverses the body of the 30S subunit contacting proteins on the other side and probably holding the rRNA structure together. The combined cluster of proteins S8, S12 and S17 appears to hold together the shoulder and platform of the 30S subunit. The protein is Small ribosomal subunit protein uS12 (rpsL) of Mycobacterium szulgai.